A 139-amino-acid chain; its full sequence is Translation initiation factor 2 subunit beta (139 aa).

It belongs to the eIF-2-beta/eIF-5 family. In terms of assembly, heterotrimer composed of an alpha, a beta and a gamma chain.

Functionally, eIF-2 functions in the early steps of protein synthesis by forming a ternary complex with GTP and initiator tRNA. The polypeptide is Translation initiation factor 2 subunit beta (Saccharolobus solfataricus (strain ATCC 35092 / DSM 1617 / JCM 11322 / P2) (Sulfolobus solfataricus)).